The primary structure comprises 372 residues: Solute carrier family 35 member F6 (372 aa).

A signal peptide spans 1–18 (MAWTKYQLFLAGLMLVTG). The next 2 helical transmembrane spans lie at 48–68 (FVQA…FYLL) and 89–109 (LLFL…YVAL). One can recognise an EamA domain in the interval 105-160 (MYVALNMTSASSFQMLRGAVIIFTGLFSVAFLDRRLVPSQWLGILITIAGLVVVGL). N110 carries N-linked (GlcNAc...) asparagine glycosylation. 7 helical membrane passes run 116-136 (SFQM…VAFL), 145-165 (WLGI…DLLS), 176-196 (VITG…QMVL), 211-231 (AVGI…VPMY), 261-281 (LIAL…FSGI), 293-312 (MVLD…ALGW), and 320-336 (ILGF…YNGL). T366 carries the phosphothreonine modification.

This sequence belongs to the SLC35F solute transporter family. As to quaternary structure, interacts with SLC25A5.

It is found in the mitochondrion. Its subcellular location is the lysosome membrane. In terms of biological role, involved in the maintenance of mitochondrial membrane potential in pancreatic ductal adenocarcinoma (PDAC) cells. Promotes pancreatic ductal adenocarcinoma (PDAC) cell growth. May play a role as a nucleotide-sugar transporter. In Rattus norvegicus (Rat), this protein is Solute carrier family 35 member F6 (Slc35f6).